We begin with the raw amino-acid sequence, 421 residues long: ATP phosphoribosyltransferase regulatory subunit (421 aa).

This sequence belongs to the class-II aminoacyl-tRNA synthetase family. HisZ subfamily. As to quaternary structure, heteromultimer composed of HisG and HisZ subunits.

The protein resides in the cytoplasm. The protein operates within amino-acid biosynthesis; L-histidine biosynthesis; L-histidine from 5-phospho-alpha-D-ribose 1-diphosphate: step 1/9. Its function is as follows. Required for the first step of histidine biosynthesis. May allow the feedback regulation of ATP phosphoribosyltransferase activity by histidine. In Clostridium novyi (strain NT), this protein is ATP phosphoribosyltransferase regulatory subunit.